Reading from the N-terminus, the 270-residue chain is Bis(5'-nucleosyl)-tetraphosphatase, symmetrical (270 aa).

Belongs to the Ap4A hydrolase family.

The catalysed reaction is P(1),P(4)-bis(5'-adenosyl) tetraphosphate + H2O = 2 ADP + 2 H(+). In terms of biological role, hydrolyzes diadenosine 5',5'''-P1,P4-tetraphosphate to yield ADP. The protein is Bis(5'-nucleosyl)-tetraphosphatase, symmetrical of Haemophilus ducreyi (strain 35000HP / ATCC 700724).